Here is a 459-residue protein sequence, read N- to C-terminus: tRNA modification GTPase MnmE (459 aa).

Positions 30, 93, and 132 each coordinate (6S)-5-formyl-5,6,7,8-tetrahydrofolate. The TrmE-type G domain maps to 226–381 (GVTMAIVGKP…LEEKILESVK (156 aa)). N236 provides a ligand contact to K(+). Residues 236–241 (NVGKST), 255–261 (TDIPGTT), and 280–283 (DTAG) each bind GTP. S240 contributes to the Mg(2+) binding site. T255, I257, and T260 together coordinate K(+). Residue T261 participates in Mg(2+) binding. K459 is a binding site for (6S)-5-formyl-5,6,7,8-tetrahydrofolate.

The protein belongs to the TRAFAC class TrmE-Era-EngA-EngB-Septin-like GTPase superfamily. TrmE GTPase family. As to quaternary structure, homodimer. Heterotetramer of two MnmE and two MnmG subunits. The cofactor is K(+).

It localises to the cytoplasm. Functionally, exhibits a very high intrinsic GTPase hydrolysis rate. Involved in the addition of a carboxymethylaminomethyl (cmnm) group at the wobble position (U34) of certain tRNAs, forming tRNA-cmnm(5)s(2)U34. The chain is tRNA modification GTPase MnmE from Fervidobacterium nodosum (strain ATCC 35602 / DSM 5306 / Rt17-B1).